We begin with the raw amino-acid sequence, 82 residues long: Small ribosomal subunit protein bS16 (82 aa).

This sequence belongs to the bacterial ribosomal protein bS16 family.

This chain is Small ribosomal subunit protein bS16, found in Elusimicrobium minutum (strain Pei191).